A 454-amino-acid polypeptide reads, in one-letter code: Allantoinase (454 aa).

Zn(2+)-binding residues include His60, His62, Lys147, His183, His239, and Asp312. Lys147 carries the post-translational modification N6-carboxylysine.

It belongs to the metallo-dependent hydrolases superfamily. Allantoinase family. As to quaternary structure, homotetramer. Zn(2+) is required as a cofactor. Carboxylation allows a single lysine to coordinate two zinc ions.

The catalysed reaction is (S)-allantoin + H2O = allantoate + H(+). The protein operates within nitrogen metabolism; (S)-allantoin degradation; allantoate from (S)-allantoin: step 1/1. Its function is as follows. Catalyzes the conversion of allantoin (5-ureidohydantoin) to allantoic acid by hydrolytic cleavage of the five-member hydantoin ring. The polypeptide is Allantoinase (Rubrobacter xylanophilus (strain DSM 9941 / JCM 11954 / NBRC 16129 / PRD-1)).